The primary structure comprises 154 residues: Protein aau3 (154 aa).

In terms of domain architecture, HTH rrf2-type spans 2–132; it reads RLTKQTNYAV…QGYTIDDLVK (131 aa). Cysteine 91, cysteine 99, and cysteine 105 together coordinate [2Fe-2S] cluster.

Requires [2Fe-2S] cluster as cofactor.

Required for growth utilizing PHB cycle intermediates. This is Protein aau3 (aau3) from Rhizobium meliloti (strain 1021) (Ensifer meliloti).